Consider the following 153-residue polypeptide: MKKNLEATIEEIVTKITDEHGFEMVDVEYVKEAGEYYLRVYIDKEEGISLNECELVSRELSPILDEKDPIKENYFLEVSSPGLDRALKKDRDFVRYQGRDVDLKLYKPLNGCKQFEGELVGLTEDNNIKIIANGKEMEFNRKDVAIVRLAIKF.

This sequence belongs to the RimP family.

Its subcellular location is the cytoplasm. Functionally, required for maturation of 30S ribosomal subunits. In Clostridioides difficile (strain 630) (Peptoclostridium difficile), this protein is Ribosome maturation factor RimP.